Consider the following 464-residue polypeptide: ATP synthase subunit beta (464 aa).

152–159 (GGAGVGKS) is an ATP binding site.

This sequence belongs to the ATPase alpha/beta chains family. In terms of assembly, F-type ATPases have 2 components, CF(1) - the catalytic core - and CF(0) - the membrane proton channel. CF(1) has five subunits: alpha(3), beta(3), gamma(1), delta(1), epsilon(1). CF(0) has three main subunits: a(1), b(2) and c(9-12). The alpha and beta chains form an alternating ring which encloses part of the gamma chain. CF(1) is attached to CF(0) by a central stalk formed by the gamma and epsilon chains, while a peripheral stalk is formed by the delta and b chains.

Its subcellular location is the cell membrane. It carries out the reaction ATP + H2O + 4 H(+)(in) = ADP + phosphate + 5 H(+)(out). Its function is as follows. Produces ATP from ADP in the presence of a proton gradient across the membrane. The catalytic sites are hosted primarily by the beta subunits. In Protochlamydia amoebophila (strain UWE25), this protein is ATP synthase subunit beta.